The primary structure comprises 685 residues: Sulfite reductase [ferredoxin], chloroplastic (685 aa).

The N-terminal 51 residues, 1–51 (MTTSFAAAALRDPKLQIPNYHGLRSSSAASSLSRNALSVPSSTRSSSLIRA), are a transit peptide targeting the chloroplast. 4 residues coordinate [4Fe-4S] cluster: Cys495, Cys501, Cys541, and Cys545. Cys545 is a binding site for siroheme.

It belongs to the nitrite and sulfite reductase 4Fe-4S domain family. As to quaternary structure, monomer. Interacts with ferredoxin. It depends on siroheme as a cofactor. The cofactor is [4Fe-4S] cluster. In terms of processing, phosphorylated; this phosphorylation reduces DNA-binding. In terms of tissue distribution, expressed in leaves, stems, and roots.

It is found in the plastid. The protein resides in the chloroplast stroma. It localises to the chloroplast nucleoid. Its subcellular location is the plastid stroma. The catalysed reaction is hydrogen sulfide + 6 oxidized [2Fe-2S]-[ferredoxin] + 3 H2O = sulfite + 6 reduced [2Fe-2S]-[ferredoxin] + 7 H(+). Essential protein with sulfite reductase activity required in assimilatory sulfate reduction pathway during both primary and secondary metabolism and thus involved in development and growth. Its function is as follows. DNA-binding protein that binds to both double-stranded and single-stranded DNA without significant sequence specificity to reversibly repress the transcriptional activity of chloroplast nucleoids by promoting DNA compaction and possibly regulate DNA replication. This Pisum sativum (Garden pea) protein is Sulfite reductase [ferredoxin], chloroplastic (SIR).